A 113-amino-acid polypeptide reads, in one-letter code: Propane 2-monooxygenase, effector component (113 aa).

The protein belongs to the TmoD/XamoD family. As to quaternary structure, the propane 2-monooxygenase multicomponent enzyme system is composed of an electron transfer component and a monooxygenase component interacting with the effector protein PrmD. The electron transfer component is composed of a reductase (PrmB), and the monooxygenase component is formed by a large subunit (PrmA) and a small subunit (PrmC).

In terms of biological role, effector component of the propane 2-monooxygenase multicomponent enzyme system which is involved in the degradation of propane via the O2-dependent hydroxylation of propane. The protein is Propane 2-monooxygenase, effector component of Rhodococcus jostii (strain RHA1).